The chain runs to 367 residues: Queuine tRNA-ribosyltransferase (367 aa).

D91 (proton acceptor) is an active-site residue. Substrate is bound by residues 91–95, D145, Q188, and G215; that span reads DSGGF. Residue D265 is the Nucleophile of the active site. The RNA binding; important for wobble base 34 recognition stretch occupies residues 270-274; that stretch reads TRVAR. Residues C303, C305, C308, and H334 each contribute to the Zn(2+) site.

This sequence belongs to the queuine tRNA-ribosyltransferase family. As to quaternary structure, homodimer. Within each dimer, one monomer is responsible for RNA recognition and catalysis, while the other monomer binds to the replacement base PreQ1. Zn(2+) serves as cofactor.

It catalyses the reaction 7-aminomethyl-7-carbaguanine + guanosine(34) in tRNA = 7-aminomethyl-7-carbaguanosine(34) in tRNA + guanine. It participates in tRNA modification; tRNA-queuosine biosynthesis. Its function is as follows. Catalyzes the base-exchange of a guanine (G) residue with the queuine precursor 7-aminomethyl-7-deazaguanine (PreQ1) at position 34 (anticodon wobble position) in tRNAs with GU(N) anticodons (tRNA-Asp, -Asn, -His and -Tyr). Catalysis occurs through a double-displacement mechanism. The nucleophile active site attacks the C1' of nucleotide 34 to detach the guanine base from the RNA, forming a covalent enzyme-RNA intermediate. The proton acceptor active site deprotonates the incoming PreQ1, allowing a nucleophilic attack on the C1' of the ribose to form the product. After dissociation, two additional enzymatic reactions on the tRNA convert PreQ1 to queuine (Q), resulting in the hypermodified nucleoside queuosine (7-(((4,5-cis-dihydroxy-2-cyclopenten-1-yl)amino)methyl)-7-deazaguanosine). The chain is Queuine tRNA-ribosyltransferase from Thermosipho africanus (strain TCF52B).